The sequence spans 240 residues: Uridylate kinase (240 aa).

Residue 12–15 coordinates ATP; that stretch reads KLSG. Residues 20–25 are involved in allosteric activation by GTP; that stretch reads GEQGNG. G54 contacts UMP. The ATP site is built by G55 and R59. Residues D74 and 135 to 142 each bind UMP; that span reads TGNPYFST. The ATP site is built by N163, Y169, and D172.

This sequence belongs to the UMP kinase family. In terms of assembly, homohexamer. Interacts with BrxC.

The protein localises to the cytoplasm. It catalyses the reaction UMP + ATP = UDP + ADP. The protein operates within pyrimidine metabolism; CTP biosynthesis via de novo pathway; UDP from UMP (UMPK route): step 1/1. Allosterically activated by GTP. Can also be activated by dGTP and 3'-anthraniloyl-2'-deoxyguanosine-5'-triphosphate (Ant-dGTP). Inhibited by UTP, 5-bromo-UTP and 5-iodo-UTP. Its function is as follows. Catalyzes the reversible phosphorylation of UMP to UDP, with ATP or dATP as the most efficient phosphate donors. Is also able to phosphorylate 5-fluoro-UMP and 6-aza-UMP. The sequence is that of Uridylate kinase (pyrH) from Bacillus subtilis (strain 168).